The sequence spans 220 residues: Ribonuclease HII (220 aa).

In terms of domain architecture, RNase H type-2 spans 1-210; sequence MKVAGVDEAG…ARKIEERFRK (210 aa). A divalent metal cation-binding residues include Asp-7, Glu-8, and Asp-105.

It belongs to the RNase HII family. Mn(2+) serves as cofactor. Mg(2+) is required as a cofactor.

It is found in the cytoplasm. It carries out the reaction Endonucleolytic cleavage to 5'-phosphomonoester.. Functionally, endonuclease that specifically degrades the RNA of RNA-DNA hybrids. This chain is Ribonuclease HII (rnhB), found in Pyrococcus horikoshii (strain ATCC 700860 / DSM 12428 / JCM 9974 / NBRC 100139 / OT-3).